The following is a 176-amino-acid chain: Ribosome maturation factor RimM (176 aa).

The PRC barrel domain occupies 97–176 (EDEFYWRDLI…QITVDWDPDF (80 aa)).

It belongs to the RimM family. Binds ribosomal protein uS19.

It localises to the cytoplasm. Functionally, an accessory protein needed during the final step in the assembly of 30S ribosomal subunit, possibly for assembly of the head region. Essential for efficient processing of 16S rRNA. May be needed both before and after RbfA during the maturation of 16S rRNA. It has affinity for free ribosomal 30S subunits but not for 70S ribosomes. This chain is Ribosome maturation factor RimM, found in Shewanella sediminis (strain HAW-EB3).